A 370-amino-acid chain; its full sequence is Probable neutral protease 2 homolog ARB_03949 (370 aa).

An N-terminal signal peptide occupies residues 1–19; sequence MQLVAALAALGALVAPAVA. A propeptide spanning residues 20–188 is cleaved from the precursor; it reads YPHAPMNETL…SIHSRALQKR (169 aa). Intrachain disulfides connect C196–C267 and C274–C292. H316 contributes to the Zn(2+) binding site. E317 is a catalytic residue. Residues H320 and D331 each contribute to the Zn(2+) site.

It belongs to the peptidase M35 family. Requires Zn(2+) as cofactor.

The protein localises to the secreted. The catalysed reaction is Preferential cleavage of bonds with hydrophobic residues in P1'. Also 3-Asn-|-Gln-4 and 8-Gly-|-Ser-9 bonds in insulin B chain.. In terms of biological role, probable secreted metalloprotease that shows high activities on basic nuclear substrates such as histone and protamine. May be involved in virulence. The chain is Probable neutral protease 2 homolog ARB_03949 from Arthroderma benhamiae (strain ATCC MYA-4681 / CBS 112371) (Trichophyton mentagrophytes).